Here is a 133-residue protein sequence, read N- to C-terminus: UPF0292 protein TON_0187 (133 aa).

Residues 20 to 100 enclose the Toprim domain; sequence EGAIIVEGPR…RVDSETRKEL (81 aa). Positions 26, 69, and 71 each coordinate Mg(2+).

This sequence belongs to the UPF0292 family. Mg(2+) is required as a cofactor.

This Thermococcus onnurineus (strain NA1) protein is UPF0292 protein TON_0187.